Reading from the N-terminus, the 219-residue chain is Asperlin biosynthesis cluster protein I (219 aa).

The tract at residues 97–124 (TGSSDNSPTATGIGAAGLTGDRPSSSGA) is disordered. A compositionally biased stretch (low complexity) spans 105–116 (TATGIGAAGLTG).

It participates in polyketide biosynthesis. Part of the gene cluster that mediates the biosynthesis of asperlin, a polyketide showing anti-inflammatory, antitumor and antibiotic activities. The first step of the asperlin biosynthesis is the production of the intermediate 2,4,6-octatrienoic acid by the highly redusing polyketide synthase alnA with cleavage of the PKS product by the esterase alnB. 2,4,6-octatrienoic acid is further converted to asperlin via several steps involving the remaining enzymes from the cluster. This Emericella nidulans (strain FGSC A4 / ATCC 38163 / CBS 112.46 / NRRL 194 / M139) (Aspergillus nidulans) protein is Asperlin biosynthesis cluster protein I.